A 438-amino-acid chain; its full sequence is Aspartate--tRNA(Asp/Asn) ligase (438 aa).

Glu-176 serves as a coordination point for L-aspartate. Residues 198–201 (QLYK) are aspartate. Arg-220 contributes to the L-aspartate binding site. ATP-binding positions include 220–222 (RAE), 228–230 (RHL), and Glu-361. Mg(2+)-binding residues include Glu-361 and Ser-364. The L-aspartate site is built by Ser-364 and Arg-368. 409 to 412 (GADR) is a binding site for ATP.

Belongs to the class-II aminoacyl-tRNA synthetase family. Type 2 subfamily. Homodimer. The cofactor is Mg(2+).

It is found in the cytoplasm. The catalysed reaction is tRNA(Asx) + L-aspartate + ATP = L-aspartyl-tRNA(Asx) + AMP + diphosphate. Functionally, aspartyl-tRNA synthetase with relaxed tRNA specificity since it is able to aspartylate not only its cognate tRNA(Asp) but also tRNA(Asn). Reaction proceeds in two steps: L-aspartate is first activated by ATP to form Asp-AMP and then transferred to the acceptor end of tRNA(Asp/Asn). The chain is Aspartate--tRNA(Asp/Asn) ligase from Methanococcus maripaludis (strain C6 / ATCC BAA-1332).